A 263-amino-acid chain; its full sequence is Small ribosomal subunit protein eS4, Y isoform 2 (263 aa).

The S4 RNA-binding domain maps to L42–N104.

This sequence belongs to the eukaryotic ribosomal protein eS4 family.

The protein is Small ribosomal subunit protein eS4, Y isoform 2 (RPS4Y2) of Homo sapiens (Human).